The sequence spans 309 residues: MRENNQSSTLEFILLGVTGQQEQEDFFYILFLFIYPITLIGNLLIVLAICSDVRLHNPMYFLLANLSLVDIFFSSVTIPKMLANHLLGSKSISFGGCLTQMYFMIALGNTDSYILAAMAYDRAVAISRPLHYTTIMSPRSCIWLIAGSWVIGNANALPHTLLTASLSFCGNQEVANFYCDITPLLKLSCSDIHFHVKMMYLGVGIFSVPLLCIIVSYIRVFSTVFQVPSTKGVLKAFSTCGSHLTVVSLYYGTVMGTYFRPLTNYSLKDAVITVMYTAVTPMLNPFIYSLRNRDMKAALRKLFNKRISS.

The Extracellular segment spans residues 1–25; that stretch reads MRENNQSSTLEFILLGVTGQQEQED. A glycan (N-linked (GlcNAc...) asparagine) is linked at Asn-5. Residues 26 to 49 form a helical membrane-spanning segment; the sequence is FFYILFLFIYPITLIGNLLIVLAI. At 50-57 the chain is on the cytoplasmic side; sequence CSDVRLHN. The helical transmembrane segment at 58 to 79 threads the bilayer; that stretch reads PMYFLLANLSLVDIFFSSVTIP. Topologically, residues 80 to 100 are extracellular; the sequence is KMLANHLLGSKSISFGGCLTQ. The cysteines at positions 97 and 189 are disulfide-linked. The helical transmembrane segment at 101-120 threads the bilayer; that stretch reads MYFMIALGNTDSYILAAMAY. Residues 121–139 are Cytoplasmic-facing; it reads DRAVAISRPLHYTTIMSPR. The chain crosses the membrane as a helical span at residues 140–158; the sequence is SCIWLIAGSWVIGNANALP. Residues 159–195 are Extracellular-facing; the sequence is HTLLTASLSFCGNQEVANFYCDITPLLKLSCSDIHFH. A helical membrane pass occupies residues 196–218; sequence VKMMYLGVGIFSVPLLCIIVSYI. The Cytoplasmic segment spans residues 219 to 235; that stretch reads RVFSTVFQVPSTKGVLK. The helical transmembrane segment at 236 to 258 threads the bilayer; it reads AFSTCGSHLTVVSLYYGTVMGTY. At 259 to 270 the chain is on the extracellular side; that stretch reads FRPLTNYSLKDA. An N-linked (GlcNAc...) asparagine glycan is attached at Asn-264. The chain crosses the membrane as a helical span at residues 271-290; it reads VITVMYTAVTPMLNPFIYSL. The Cytoplasmic portion of the chain corresponds to 291–309; that stretch reads RNRDMKAALRKLFNKRISS.

Belongs to the G-protein coupled receptor 1 family.

It localises to the cell membrane. In terms of biological role, odorant receptor. The chain is Olfactory receptor 1A1 (OR1A1) from Homo sapiens (Human).